The sequence spans 251 residues: MTHNKTIKKVYIVGAGPGDPELLTLKAQRVLREADVVIYDALVNPEILQHCKPNAEIIKVGKRRNNHSFSQLQIASLLIDRAKKGERVIRLKGGDPLIFGRLGEEILELFSKNIEIEIIPGITSAFAVAADMKFPLTHRQLGSSITFLTGEEFYEKTTNKLKWERIIWGADTIIVYMILYNLPKIIKKFLSVGYSAEKPIVLVQWASLKKKNFLIGTIGTIIHQVIESKFGPPSLAIIGEVIEISSIIQKL.

S-adenosyl-L-homocysteine is bound by residues Pro-17, 93 to 95 (GGD), 123 to 124 (TS), Met-177, and Ala-206.

Belongs to the precorrin methyltransferase family.

The protein localises to the plastid. It is found in the chloroplast. The catalysed reaction is uroporphyrinogen III + 2 S-adenosyl-L-methionine = precorrin-2 + 2 S-adenosyl-L-homocysteine + H(+). Its pathway is cofactor biosynthesis; adenosylcobalamin biosynthesis; precorrin-2 from uroporphyrinogen III: step 1/1. It functions in the pathway porphyrin-containing compound metabolism; siroheme biosynthesis; precorrin-2 from uroporphyrinogen III: step 1/1. In terms of biological role, catalyzes the two successive C-2 and C-7 methylation reactions involved in the conversion of uroporphyrinogen III to precorrin-2 via the intermediate formation of precorrin-1. It is a step in the biosynthesis of both cobalamin (vitamin B12) and siroheme. This is Uroporphyrinogen-III C-methyltransferase (cobA) from Cyanidium caldarium (Red alga).